The primary structure comprises 318 residues: Aspartate carbamoyltransferase catalytic subunit (318 aa).

Residues R64 and T65 each coordinate carbamoyl phosphate. K92 is an L-aspartate binding site. Positions 114, 142, and 145 each coordinate carbamoyl phosphate. Residues R175 and R229 each coordinate L-aspartate. Residues G270 and P271 each coordinate carbamoyl phosphate.

It belongs to the aspartate/ornithine carbamoyltransferase superfamily. ATCase family. As to quaternary structure, heterododecamer (2C3:3R2) of six catalytic PyrB chains organized as two trimers (C3), and six regulatory PyrI chains organized as three dimers (R2).

It carries out the reaction carbamoyl phosphate + L-aspartate = N-carbamoyl-L-aspartate + phosphate + H(+). It participates in pyrimidine metabolism; UMP biosynthesis via de novo pathway; (S)-dihydroorotate from bicarbonate: step 2/3. Functionally, catalyzes the condensation of carbamoyl phosphate and aspartate to form carbamoyl aspartate and inorganic phosphate, the committed step in the de novo pyrimidine nucleotide biosynthesis pathway. This is Aspartate carbamoyltransferase catalytic subunit from Rhodospirillum centenum (strain ATCC 51521 / SW).